The following is a 341-amino-acid chain: Small ribosomal subunit protein uS3 (341 aa).

One can recognise a KH type-2 domain in the interval 38-106; it reads IRRMMTRGME…QVQLNILEVK (69 aa). Disordered stretches follow at residues 224–246 and 274–341; these read RAVR…LETA and PAGQ…TKEG. 2 stretches are compositionally biased toward low complexity: residues 285 to 303 and 311 to 333; these read AEQP…VTGE and AAPA…DAPS.

The protein belongs to the universal ribosomal protein uS3 family. As to quaternary structure, part of the 30S ribosomal subunit. Forms a tight complex with proteins S10 and S14.

In terms of biological role, binds the lower part of the 30S subunit head. Binds mRNA in the 70S ribosome, positioning it for translation. In Acidothermus cellulolyticus (strain ATCC 43068 / DSM 8971 / 11B), this protein is Small ribosomal subunit protein uS3.